A 1233-amino-acid chain; its full sequence is Pesticidal crystal protein Cry1Bc (1233 aa).

Belongs to the delta endotoxin family.

Functionally, promotes colloidosmotic lysis by binding to the midgut epithelial cells of insects. This is Pesticidal crystal protein Cry1Bc (cry1Bc) from Bacillus thuringiensis subsp. morrisoni.